We begin with the raw amino-acid sequence, 506 residues long: Lysine--tRNA ligase (506 aa).

Mg(2+)-binding residues include E416 and E423.

Belongs to the class-II aminoacyl-tRNA synthetase family. In terms of assembly, homodimer. Mg(2+) serves as cofactor.

Its subcellular location is the cytoplasm. The catalysed reaction is tRNA(Lys) + L-lysine + ATP = L-lysyl-tRNA(Lys) + AMP + diphosphate. In Xylella fastidiosa (strain M12), this protein is Lysine--tRNA ligase.